The following is a 135-amino-acid chain: Large ribosomal subunit protein uL16c (135 aa).

The protein belongs to the universal ribosomal protein uL16 family. In terms of assembly, part of the 50S ribosomal subunit.

It is found in the plastid. Its subcellular location is the chloroplast. This is Large ribosomal subunit protein uL16c from Oenothera argillicola (Appalachian evening primrose).